A 283-amino-acid chain; its full sequence is DegV domain-containing protein CPE0304 (283 aa).

Residues 3–281 (VKVITDSTSC…VKSVGIAYAR (279 aa)) enclose the DegV domain. Positions 60 and 92 each coordinate hexadecanoate.

In terms of biological role, may bind long-chain fatty acids, such as palmitate, and may play a role in lipid transport or fatty acid metabolism. This Clostridium perfringens (strain 13 / Type A) protein is DegV domain-containing protein CPE0304.